A 293-amino-acid chain; its full sequence is Formamidopyrimidine-DNA glycosylase (293 aa).

The Schiff-base intermediate with DNA role is filled by proline 2. Residue glutamate 3 is the Proton donor of the active site. Lysine 60 (proton donor; for beta-elimination activity) is an active-site residue. DNA is bound by residues histidine 110, arginine 129, and arginine 174. The FPG-type zinc finger occupies 259 to 293 (NVYRRTGKECRKCGNLIEKQKIAGRSTHWCPNCQK). Arginine 283 (proton donor; for delta-elimination activity) is an active-site residue.

It belongs to the FPG family. In terms of assembly, monomer. Zn(2+) serves as cofactor.

It catalyses the reaction Hydrolysis of DNA containing ring-opened 7-methylguanine residues, releasing 2,6-diamino-4-hydroxy-5-(N-methyl)formamidopyrimidine.. The enzyme catalyses 2'-deoxyribonucleotide-(2'-deoxyribose 5'-phosphate)-2'-deoxyribonucleotide-DNA = a 3'-end 2'-deoxyribonucleotide-(2,3-dehydro-2,3-deoxyribose 5'-phosphate)-DNA + a 5'-end 5'-phospho-2'-deoxyribonucleoside-DNA + H(+). Involved in base excision repair of DNA damaged by oxidation or by mutagenic agents. Acts as a DNA glycosylase that recognizes and removes damaged bases. Has a preference for oxidized purines, such as 7,8-dihydro-8-oxoguanine (8-oxoG). Has AP (apurinic/apyrimidinic) lyase activity and introduces nicks in the DNA strand. Cleaves the DNA backbone by beta-delta elimination to generate a single-strand break at the site of the removed base with both 3'- and 5'-phosphates. This chain is Formamidopyrimidine-DNA glycosylase, found in Prochlorococcus marinus (strain MIT 9312).